The primary structure comprises 142 residues: Transcriptional regulator MraZ (142 aa).

2 consecutive SpoVT-AbrB domains span residues 5 to 47 (EYNH…PLGE) and 76 to 119 (ANEV…SKEK).

Belongs to the MraZ family. Forms oligomers.

It localises to the cytoplasm. The protein resides in the nucleoid. The protein is Transcriptional regulator MraZ of Clostridium acetobutylicum (strain ATCC 824 / DSM 792 / JCM 1419 / IAM 19013 / LMG 5710 / NBRC 13948 / NRRL B-527 / VKM B-1787 / 2291 / W).